A 236-amino-acid polypeptide reads, in one-letter code: Ribonuclease P protein component 3 (236 aa).

Belongs to the eukaryotic/archaeal RNase P protein component 3 family. As to quaternary structure, consists of a catalytic RNA component and at least 4-5 protein subunits.

The protein resides in the cytoplasm. It carries out the reaction Endonucleolytic cleavage of RNA, removing 5'-extranucleotides from tRNA precursor.. In terms of biological role, part of ribonuclease P, a protein complex that generates mature tRNA molecules by cleaving their 5'-ends. In Natronomonas pharaonis (strain ATCC 35678 / DSM 2160 / CIP 103997 / JCM 8858 / NBRC 14720 / NCIMB 2260 / Gabara) (Halobacterium pharaonis), this protein is Ribonuclease P protein component 3.